Reading from the N-terminus, the 147-residue chain is Ubiquitin-conjugating enzyme E2-16 kDa (147 aa).

The 147-residue stretch at 1–147 (MALKRINKEL…AREWTRKYAI (147 aa)) folds into the UBC core domain. The active-site Glycyl thioester intermediate is the C107.

This sequence belongs to the ubiquitin-conjugating enzyme family.

It carries out the reaction S-ubiquitinyl-[E1 ubiquitin-activating enzyme]-L-cysteine + [E2 ubiquitin-conjugating enzyme]-L-cysteine = [E1 ubiquitin-activating enzyme]-L-cysteine + S-ubiquitinyl-[E2 ubiquitin-conjugating enzyme]-L-cysteine.. Its pathway is protein modification; protein ubiquitination. Catalyzes the covalent attachment of ubiquitin to other proteins. This is Ubiquitin-conjugating enzyme E2-16 kDa (UBC1) from Pyricularia oryzae (strain 70-15 / ATCC MYA-4617 / FGSC 8958) (Rice blast fungus).